We begin with the raw amino-acid sequence, 218 residues long: Large ribosomal subunit protein uL3 (218 aa).

Residues 126–169 (HGFSRGPMTHGSKNHRQPGSIGAGTTPGRIYPGKRMSGRYGGKK) are disordered.

This sequence belongs to the universal ribosomal protein uL3 family. In terms of assembly, part of the 50S ribosomal subunit. Forms a cluster with proteins L14 and L19.

Functionally, one of the primary rRNA binding proteins, it binds directly near the 3'-end of the 23S rRNA, where it nucleates assembly of the 50S subunit. The polypeptide is Large ribosomal subunit protein uL3 (Synechococcus sp. (strain CC9902)).